The following is a 164-amino-acid chain: CASP-like protein 1C2 (164 aa).

The Cytoplasmic segment spans residues 1–8; sequence MVKLTQRL. The helical transmembrane segment at 9–29 threads the bilayer; that stretch reads GGLVLRFAAFCAALGAVIAMI. Over 30 to 51 the chain is Extracellular; it reads TSRERSSFFVISLVAKYSDLAA. A helical membrane pass occupies residues 52-72; the sequence is FKYFVIANAIVTVYSFLVLFL. The Cytoplasmic segment spans residues 73–80; the sequence is PKESLLWK. A helical membrane pass occupies residues 81-101; it reads FVVVLDLMVTMLLTSSLSAAV. At 102 to 129 the chain is on the extracellular side; sequence AVAQVGKRGNANAGWLPICGQVPRFCDQ. The helical transmembrane segment at 130–150 threads the bilayer; sequence ITGALIAGLVALVLYVFLLIF. At 151–164 the chain is on the cytoplasmic side; sequence SIHHVVDPFLLRKS.

This sequence belongs to the Casparian strip membrane proteins (CASP) family. As to quaternary structure, homodimer and heterodimers.

It localises to the cell membrane. In Arabidopsis thaliana (Mouse-ear cress), this protein is CASP-like protein 1C2.